The following is an 86-amino-acid chain: Large ribosomal subunit protein bL27 (86 aa).

The tract at residues 1 to 22 (MAHKKAGGSTRNGRDSESKRLG) is disordered.

It belongs to the bacterial ribosomal protein bL27 family.

This Vibrio cholerae serotype O1 (strain ATCC 39315 / El Tor Inaba N16961) protein is Large ribosomal subunit protein bL27.